The chain runs to 712 residues: Polyribonucleotide nucleotidyltransferase (712 aa).

Residues D485 and D491 each coordinate Mg(2+). The KH domain occupies 552-611 (PRIHTMKIDPKKIKDVIGKGGAVIRSLTEETGTSIDIDDDGTVKIAATDNNAAKMVMSRI). The 69-residue stretch at 621–689 (NAIYTGKVSR…RQNRIRLTMK (69 aa)) folds into the S1 motif domain.

It belongs to the polyribonucleotide nucleotidyltransferase family. In terms of assembly, component of the RNA degradosome, which is a multiprotein complex involved in RNA processing and mRNA degradation. The cofactor is Mg(2+).

Its subcellular location is the cytoplasm. The enzyme catalyses RNA(n+1) + phosphate = RNA(n) + a ribonucleoside 5'-diphosphate. Its function is as follows. Involved in mRNA degradation. Catalyzes the phosphorolysis of single-stranded polyribonucleotides processively in the 3'- to 5'-direction. The protein is Polyribonucleotide nucleotidyltransferase of Haemophilus ducreyi (strain 35000HP / ATCC 700724).